The primary structure comprises 856 residues: 3-hydroxy-3-methylglutaryl-coenzyme A reductase (856 aa).

The next 4 membrane-spanning stretches (helical) occupy residues 12–32, 89–109, 123–143, and 190–210; these read FCAS…VCML, ILGI…SSVI, LFFF…QFAL, and VLCC…MTFY. Asn-326 carries an N-linked (GlcNAc...) asparagine glycan. Residues 344 to 364 form a helical membrane-spanning segment; the sequence is SADHIVILILLLALAVKFVFF. The tract at residues 365–443 is linker; sequence ETRDELTTTR…CEVMALVTSG (79 aa). A glycan (N-linked (GlcNAc...) asparagine) is linked at Asn-412. The interval 443–771 is catalytic; sequence GHIAGYQLEK…SCTMPSIEIG (329 aa). Catalysis depends on charge relay system residues Glu-528 and Lys-659. Asn-700 carries an N-linked (GlcNAc...) asparagine glycan. Asp-735 (charge relay system) is an active-site residue. The active-site Proton donor is His-834. Positions 836–856 are disordered; sequence RHNRSSVSTSGSEPSTPACKS. A glycan (N-linked (GlcNAc...) asparagine) is linked at Asn-838. The span at 840-856 shows a compositional bias: low complexity; it reads SSVSTSGSEPSTPACKS.

It belongs to the HMG-CoA reductase family.

It localises to the endoplasmic reticulum membrane. It catalyses the reaction (R)-mevalonate + 2 NADP(+) + CoA = (3S)-3-hydroxy-3-methylglutaryl-CoA + 2 NADPH + 2 H(+). Its pathway is metabolic intermediate biosynthesis; (R)-mevalonate biosynthesis; (R)-mevalonate from acetyl-CoA: step 3/3. The activity of HMG-CoA-reductase is suppressed by exogenous mevalonate. Functionally, synthesis of mevalonate for the production of non-sterol isoprenoids, which are essential for growth differentiation. This is 3-hydroxy-3-methylglutaryl-coenzyme A reductase from Blattella germanica (German cockroach).